The chain runs to 900 residues: Isoleucine--tRNA ligase (900 aa).

Residues 58 to 68 (PYANGNIHIGH) carry the 'HIGH' region motif. E552 is an L-isoleucyl-5'-AMP binding site. A 'KMSKS' region motif is present at residues 593–597 (KMSKS). K596 lines the ATP pocket.

The protein belongs to the class-I aminoacyl-tRNA synthetase family. IleS type 1 subfamily. As to quaternary structure, monomer.

The protein localises to the cytoplasm. The enzyme catalyses tRNA(Ile) + L-isoleucine + ATP = L-isoleucyl-tRNA(Ile) + AMP + diphosphate. Catalyzes the attachment of isoleucine to tRNA(Ile). As IleRS can inadvertently accommodate and process structurally similar amino acids such as valine, to avoid such errors it has two additional distinct tRNA(Ile)-dependent editing activities. One activity is designated as 'pretransfer' editing and involves the hydrolysis of activated Val-AMP. The other activity is designated 'posttransfer' editing and involves deacylation of mischarged Val-tRNA(Ile). The polypeptide is Isoleucine--tRNA ligase (Ureaplasma parvum serovar 3 (strain ATCC 700970)).